The sequence spans 205 residues: Ribonuclease HII (205 aa).

An RNase H type-2 domain is found at 16 to 205; the sequence is VSEVGIDEVG…KSFLKKSKLI (190 aa). A divalent metal cation-binding residues include Asp22, Glu23, and Asp118.

It belongs to the RNase HII family. Mn(2+) serves as cofactor. Mg(2+) is required as a cofactor.

It is found in the cytoplasm. It catalyses the reaction Endonucleolytic cleavage to 5'-phosphomonoester.. Functionally, endonuclease that specifically degrades the RNA of RNA-DNA hybrids. The polypeptide is Ribonuclease HII (Prochlorococcus marinus (strain AS9601)).